A 248-amino-acid chain; its full sequence is tRNA (guanine-N(1)-)-methyltransferase (248 aa).

Residues Gly113 and 133 to 138 each bind S-adenosyl-L-methionine; that span reads IGDYVL.

Belongs to the RNA methyltransferase TrmD family. Homodimer.

It localises to the cytoplasm. The enzyme catalyses guanosine(37) in tRNA + S-adenosyl-L-methionine = N(1)-methylguanosine(37) in tRNA + S-adenosyl-L-homocysteine + H(+). Functionally, specifically methylates guanosine-37 in various tRNAs. This is tRNA (guanine-N(1)-)-methyltransferase from Shewanella woodyi (strain ATCC 51908 / MS32).